The following is a 231-amino-acid chain: uncharacterized protein (231 aa).

A run of 4 helical transmembrane segments spans residues 39–59 (FCIS…YGPF), 70–90 (ALSL…VPVI), 156–176 (AIIS…GGSI), and 189–206 (IVAI…NMFF).

This sequence belongs to the FliR/MopE/SpaR family.

It localises to the cell membrane. This is an uncharacterized protein from Escherichia coli (strain K12).